A 206-amino-acid chain; its full sequence is Ectodysplasin-A receptor-associated adapter protein (206 aa).

Disordered regions lie at residues 1–36 and 52–77; these read MRPL…DKYP and TLNC…TGDP. Polar residues-rich tracts occupy residues 24-33 and 52-62; these read PSTLSFNTSD and TLNCPPNSDMK. A Death domain is found at 114–190; the sequence is DVIRIKLDPC…DVEKVLRRWV (77 aa).

Self-associates and binds to EDAR, TRAF1, TRAF2 and TRAF3.

The protein resides in the cytoplasm. In terms of biological role, adapter protein that interacts with EDAR DEATH domain and couples the receptor to EDA signaling pathway during morphogenesis of ectodermal organs. Mediates the activation of NF-kappa-B. In Macaca fascicularis (Crab-eating macaque), this protein is Ectodysplasin-A receptor-associated adapter protein (EDARADD).